Here is a 376-residue protein sequence, read N- to C-terminus: Chaperone protein DnaJ (376 aa).

The J domain maps to 5-70 (DYYEVLGVAK…QKRAAYDQYG (66 aa)). A CR-type zinc finger spans residues 136–214 (GYDTQIRVPS…CHGSGKVKET (79 aa)). 8 residues coordinate Zn(2+): Cys-149, Cys-152, Cys-166, Cys-169, Cys-188, Cys-191, Cys-202, and Cys-205. CXXCXGXG motif repeat units follow at residues 149 to 156 (CGVCHGSG), 166 to 173 (CPTCHGQG), 188 to 195 (CPKCHGTG), and 202 to 209 (CAHCHGSG).

The protein belongs to the DnaJ family. As to quaternary structure, homodimer. Zn(2+) serves as cofactor.

The protein localises to the cytoplasm. Participates actively in the response to hyperosmotic and heat shock by preventing the aggregation of stress-denatured proteins and by disaggregating proteins, also in an autonomous, DnaK-independent fashion. Unfolded proteins bind initially to DnaJ; upon interaction with the DnaJ-bound protein, DnaK hydrolyzes its bound ATP, resulting in the formation of a stable complex. GrpE releases ADP from DnaK; ATP binding to DnaK triggers the release of the substrate protein, thus completing the reaction cycle. Several rounds of ATP-dependent interactions between DnaJ, DnaK and GrpE are required for fully efficient folding. Also involved, together with DnaK and GrpE, in the DNA replication of plasmids through activation of initiation proteins. The protein is Chaperone protein DnaJ of Burkholderia mallei (strain NCTC 10229).